Consider the following 118-residue polypeptide: Small ribosomal subunit protein uS13 (118 aa).

Residues glycine 94–lysine 118 are disordered.

Belongs to the universal ribosomal protein uS13 family. As to quaternary structure, part of the 30S ribosomal subunit. Forms a loose heterodimer with protein S19. Forms two bridges to the 50S subunit in the 70S ribosome.

Its function is as follows. Located at the top of the head of the 30S subunit, it contacts several helices of the 16S rRNA. In the 70S ribosome it contacts the 23S rRNA (bridge B1a) and protein L5 of the 50S subunit (bridge B1b), connecting the 2 subunits; these bridges are implicated in subunit movement. Contacts the tRNAs in the A and P-sites. The protein is Small ribosomal subunit protein uS13 of Mannheimia succiniciproducens (strain KCTC 0769BP / MBEL55E).